A 339-amino-acid chain; its full sequence is MGEKLPVVYKRFICSFPDCNATYNKNRKLQAHLCKHTGERPFPCTYEGCEKGFVTLHHLNRHVLSHTGEKPCKCETENCNLAFTTASNMRLHFKRAHSSPAQVYVCYFADCGQQFRKHNQLKIHQYIHTNQQPFKCSHEGCDKCYASPSRLKRHEKTHAGYPCRKDSTCPFVGKTWSDYMKHAAELHSEVTCSICNRTFKRKSFLKEHKKIHREERIVYRCPRENCDRTYTTKFNLKSHILTFHENLRPFVCEHEGCGKTFAMKQSLDRHFNTHDPEKKKMVKPPRPVRSLASRLSGYKPKKSKKKKKPSQTPAMESQEQQPDASKADPLPVLENLTLK.

9 C2H2-type zinc fingers span residues 12-36 (FICSFPDCNATYNKNRKLQAHLCKH), 42-66 (FPCTYEGCEKGFVTLHHLNRHVLSH), 72-97 (CKCETENCNLAFTTASNMRLHFKRAH), 104-128 (YVCYFADCGQQFRKHNQLKIHQYIH), 134-158 (FKCSHEGCDKCYASPSRLKRHEKTH), 161-187 (YPCRKDSTCPFVGKTWSDYMKHAAELH), 190-212 (VTCSICNRTFKRKSFLKEHKKIH), 219-244 (YRCPRENCDRTYTTKFNLKSHILTFH), and 250-274 (FVCEHEGCGKTFAMKQSLDRHFNTH). Residues 271–339 (FNTHDPEKKK…LPVLENLTLK (69 aa)) are disordered. Over residues 299–309 (KPKKSKKKKKP) the composition is skewed to basic residues. Polar residues predominate over residues 311–323 (QTPAMESQEQQPD).

It is found in the nucleus. Its function is as follows. Involved in ribosomal large subunit biogenesis. Interacts with the internal control region (ICR) of approximately 50 bases within the 5S RNA genes, is required for correct transcription of these genes by RNA polymerase III. Also binds the transcribed 5S RNA's. The sequence is that of Transcription factor IIIA (gtf3a) from Anaxyrus americanus (American toad).